The primary structure comprises 104 residues: Replication restart protein PriB (104 aa).

The SSB domain occupies 1–101; that stretch reads MTNRLVLSGT…LHAEQIELID (101 aa).

It belongs to the PriB family. In terms of assembly, homodimer. Interacts with PriA and DnaT. Component of the replication restart primosome. Primosome assembly occurs via a 'hand-off' mechanism. PriA binds to replication forks, subsequently PriB then DnaT bind; DnaT then displaces ssDNA to generate the helicase loading substrate.

In terms of biological role, involved in the restart of stalled replication forks, which reloads the replicative helicase on sites other than the origin of replication; the PriA-PriB pathway is the major replication restart pathway. During primosome assembly it facilitates complex formation between PriA and DnaT on DNA; stabilizes PriA on DNA. Stimulates the DNA unwinding activity of PriA helicase. The chain is Replication restart protein PriB from Escherichia coli (strain ATCC 8739 / DSM 1576 / NBRC 3972 / NCIMB 8545 / WDCM 00012 / Crooks).